The primary structure comprises 70 residues: Alpha-toxin Bot9 (70 aa).

The LCN-type CS-alpha/beta domain occupies 6 to 69 (RDGYIVYPNN…PIKDPSYKCY (64 aa)). Cystine bridges form between Cys16/Cys68, Cys20/Cys40, Cys26/Cys50, and Cys30/Cys52.

Belongs to the long (4 C-C) scorpion toxin superfamily. Sodium channel inhibitor family. Alpha subfamily. Expressed by the venom gland.

It localises to the secreted. Its function is as follows. Alpha toxins bind voltage-independently at site-3 of sodium channels (Nav) and inhibit the inactivation of the activated channels, thereby blocking neuronal transmission. This toxin is active against rat Nav1.2/SCN2A and B.germanica Nav1. The chain is Alpha-toxin Bot9 from Buthus occitanus tunetanus (Common European scorpion).